A 1217-amino-acid polypeptide reads, in one-letter code: Valine--tRNA ligase (1217 aa).

Residues 27-155 form the GST C-terminal domain; that stretch reads NAKQQSQVWQ…ISLCEKMVPV (129 aa). A 'HIGH' region motif is present at residues 293–303; sequence PNVTGSLHLGH. The short motif at 809–813 is the 'KMSKS' region element; it reads KMSKS. Lys812 is a binding site for ATP.

Belongs to the class-I aminoacyl-tRNA synthetase family.

It carries out the reaction tRNA(Val) + L-valine + ATP = L-valyl-tRNA(Val) + AMP + diphosphate. The protein is Valine--tRNA ligase (vars1) of Takifugu rubripes (Japanese pufferfish).